The sequence spans 345 residues: Anthranilate phosphoribosyltransferase (345 aa).

5-phospho-alpha-D-ribose 1-diphosphate-binding positions include glycine 80, 83–84 (GD), threonine 88, 90–93 (NIST), 108–116 (KHGNRSVTS), and serine 120. Anthranilate is bound at residue glycine 80. Serine 92 contributes to the Mg(2+) binding site. Asparagine 111 is a binding site for anthranilate. Anthranilate is bound at residue arginine 166. Aspartate 229 and glutamate 230 together coordinate Mg(2+).

The protein belongs to the anthranilate phosphoribosyltransferase family. Homodimer. Requires Mg(2+) as cofactor.

It carries out the reaction N-(5-phospho-beta-D-ribosyl)anthranilate + diphosphate = 5-phospho-alpha-D-ribose 1-diphosphate + anthranilate. It participates in amino-acid biosynthesis; L-tryptophan biosynthesis; L-tryptophan from chorismate: step 2/5. Its function is as follows. Catalyzes the transfer of the phosphoribosyl group of 5-phosphorylribose-1-pyrophosphate (PRPP) to anthranilate to yield N-(5'-phosphoribosyl)-anthranilate (PRA). This is Anthranilate phosphoribosyltransferase from Chlorobium phaeobacteroides (strain BS1).